We begin with the raw amino-acid sequence, 209 residues long: Uracil phosphoribosyltransferase (209 aa).

5-phospho-alpha-D-ribose 1-diphosphate is bound by residues Arg-79, Arg-104, and 131–139 (DPMLATGNS). Uracil contacts are provided by residues Ile-194 and 199–201 (GDA). Asp-200 contacts 5-phospho-alpha-D-ribose 1-diphosphate.

It belongs to the UPRTase family. The cofactor is Mg(2+).

The catalysed reaction is UMP + diphosphate = 5-phospho-alpha-D-ribose 1-diphosphate + uracil. It participates in pyrimidine metabolism; UMP biosynthesis via salvage pathway; UMP from uracil: step 1/1. With respect to regulation, allosterically activated by GTP. In terms of biological role, catalyzes the conversion of uracil and 5-phospho-alpha-D-ribose 1-diphosphate (PRPP) to UMP and diphosphate. The sequence is that of Uracil phosphoribosyltransferase from Rhizobium leguminosarum bv. trifolii (strain WSM2304).